Reading from the N-terminus, the 412-residue chain is tRNA N6-adenosine threonylcarbamoyltransferase, mitochondrial (412 aa).

The transit peptide at 1 to 78 directs the protein to the mitochondrion; that stretch reads MLCLVYNSIL…IICLNTHRTI (78 aa). The a divalent metal cation site is built by His157 and His161. Residues 179 to 183, Asp212, Ala228, Glu232, 328 to 329, and Ser363 contribute to the substrate site; these read LVSGG and RN. Residue Asp364 participates in a divalent metal cation binding.

This sequence belongs to the KAE1 / TsaD family. In terms of assembly, homodimer. The cofactor is a divalent metal cation.

The protein localises to the mitochondrion. It carries out the reaction L-threonylcarbamoyladenylate + adenosine(37) in tRNA = N(6)-L-threonylcarbamoyladenosine(37) in tRNA + AMP + H(+). Its function is as follows. Required for the formation of a threonylcarbamoyl group on adenosine at position 37 (t(6)A37) in mitochondrial tRNAs that read codons beginning with adenine. Probably involved in the transfer of the threonylcarbamoyl moiety of threonylcarbamoyl-AMP (TC-AMP) to the N6 group of A37. Involved in mitochondrial genome maintenance. The chain is tRNA N6-adenosine threonylcarbamoyltransferase, mitochondrial (pgp1) from Schizosaccharomyces pombe (strain 972 / ATCC 24843) (Fission yeast).